The sequence spans 449 residues: tRNA-2-methylthio-N(6)-dimethylallyladenosine synthase (449 aa).

An MTTase N-terminal domain is found at Asp7–Gln124. Positions 16, 52, 87, 163, 167, and 170 each coordinate [4Fe-4S] cluster. One can recognise a Radical SAM core domain in the interval Arg149–Ser379. The 64-residue stretch at Ser382–Ile445 folds into the TRAM domain.

It belongs to the methylthiotransferase family. MiaB subfamily. As to quaternary structure, monomer. The cofactor is [4Fe-4S] cluster.

Its subcellular location is the cytoplasm. It carries out the reaction N(6)-dimethylallyladenosine(37) in tRNA + (sulfur carrier)-SH + AH2 + 2 S-adenosyl-L-methionine = 2-methylsulfanyl-N(6)-dimethylallyladenosine(37) in tRNA + (sulfur carrier)-H + 5'-deoxyadenosine + L-methionine + A + S-adenosyl-L-homocysteine + 2 H(+). In terms of biological role, catalyzes the methylthiolation of N6-(dimethylallyl)adenosine (i(6)A), leading to the formation of 2-methylthio-N6-(dimethylallyl)adenosine (ms(2)i(6)A) at position 37 in tRNAs that read codons beginning with uridine. The polypeptide is tRNA-2-methylthio-N(6)-dimethylallyladenosine synthase (Chlorobium chlorochromatii (strain CaD3)).